A 514-amino-acid polypeptide reads, in one-letter code: Serine/threonine-protein kinase 33 (514 aa).

The segment covering 65 to 86 (INRDITSRKDLPSRTSNVERKA) has biased composition (basic and acidic residues). The disordered stretch occupies residues 65-91 (INRDITSRKDLPSRTSNVERKASQQQW). The Protein kinase domain occupies 116–381 (YTFGRILGKG…AKELLDNQWL (266 aa)). Residues 122–130 (LGKGSFGIV) and K145 each bind ATP. The Proton acceptor role is filled by D238. Disordered regions lie at residues 402–468 (KNNP…DMCS) and 485–514 (MEKTPVTPSQGTATKYPAKSGALSRTKKKL). The residue at position 407 (S407) is a Phosphoserine. The segment covering 413–426 (TEEKNKPSTEEKLK) has biased composition (basic and acidic residues). The segment covering 449-468 (STAYEKQFPATSKDNFDMCS) has biased composition (polar residues).

It belongs to the protein kinase superfamily. CAMK Ser/Thr protein kinase family. CaMK subfamily. Homodimer. In terms of processing, autophosphorylated. In terms of tissue distribution, highly expressed in testis, fetal lung and heart, followed by pituitary gland, kidney, interventricular septum, pancreas, heart, trachea, thyroid gland and uterus. Weak hybridization signals were observed in the following tissues: amygdala, aorta, esophagus, colon ascending, colon transverse, skeletal muscle, spleen, peripheral blood leukocyte, lymph node, bone marrow, placenta, prostate, liver, salivary gland, mammary gland, some tumor cell lines, fetal brain, fetal liver, fetal spleen and fetal thymus. No signal at all was detectable in RNA from tissues of the nervous system.

It localises to the cytoplasm. Its subcellular location is the cytoskeleton. The protein localises to the perinuclear region. It catalyses the reaction L-seryl-[protein] + ATP = O-phospho-L-seryl-[protein] + ADP + H(+). It carries out the reaction L-threonyl-[protein] + ATP = O-phospho-L-threonyl-[protein] + ADP + H(+). Its activity is regulated as follows. Specifically inhibited by CDD-2807 ((3-([1,1'-Biphenyl]-2-ylethynyl)-1H-indazol-5-yl)(2,6-diazaspiro[3.5]nonan-2-yl)methanone). In terms of biological role, serine/threonine protein kinase required for spermatid differentiation and male fertility. Promotes sperm flagella assembly during spermatogenesis by mediating phosphorylation of fibrous sheath proteins AKAP3 and AKAP4. Also phosphorylates vimentin/VIM, thereby regulating the dynamic behavior of the intermediate filament cytoskeleton. The polypeptide is Serine/threonine-protein kinase 33 (Homo sapiens (Human)).